We begin with the raw amino-acid sequence, 42 residues long: Alpha-conotoxin VnIB (42 aa).

A propeptide spanning residues 1 to 22 (ASDGRNAAADDKASDPIALTVR) is cleaved from the precursor. Intrachain disulfides connect C25–C31 and C26–C38. Residue G39 is modified to Glycine amide.

Belongs to the conotoxin A superfamily. Expressed by the venom duct.

It localises to the secreted. Its function is as follows. Alpha-conotoxins act on postsynaptic membranes, they bind to the nicotinic acetylcholine receptors (nAChR) and thus inhibit them. This toxin potently and selectively inhibits human and rat alpha-6-beta-4/CHRNA6-CHRNB4 nAChR (IC(50)=12 nM on rat nAChR). It exhibits rapid binding and unbinding at this receptor. It also shows activity on rat alpha-6-beta-4/CHRNA6-CHRNB4 (IC(50)=12 nM), human alpha-6/alpha-3-beta-4 (CHRNA6/CHRNA3-CHRNB4) (IC(50)=5.3 nM), rat alpha-6/alpha-3-beta-4 (CHRNA6/CHRNA3-CHRNB4) (IC(50)=18 nM), rat alpha-3-beta-4/CHRNA3-CHRNB4 (IC(50)=320 nM), and rat alpha-6/alpha-3-beta-2-beta-3 (CHRNA6/CHRNA3-CHRNB2-CHRNB3) (IC(50)=4 uM). This is Alpha-conotoxin VnIB from Conus ventricosus (Mediterranean cone).